The sequence spans 397 residues: Homocysteine-responsive endoplasmic reticulum-resident ubiquitin-like domain member 2 protein (397 aa).

The region spanning 10-89 (VTLVIKAPNQ…HMVHLVCASR (80 aa)) is the Ubiquitin-like domain. 2 disordered regions span residues 87–166 (ASRS…MQGG) and 210–246 (APSP…PANP). Low complexity-rich tracts occupy residues 88-123 (SRSP…STPS) and 210-220 (APSPSLSAGPA). Residues 293-313 (FVMVIGAMLLVYLHQAGWFPF) traverse the membrane as a helical segment. A disordered region spans residues 344–373 (DEGIEDDEGDSGEEGPDDPMNPGPHQPGFL). A compositionally biased stretch (acidic residues) spans 345–360 (EGIEDDEGDSGEEGPD).

It is found in the membrane. In terms of biological role, could be involved in the unfolded protein response (UPR) pathway. The sequence is that of Homocysteine-responsive endoplasmic reticulum-resident ubiquitin-like domain member 2 protein (herpud2) from Danio rerio (Zebrafish).